Reading from the N-terminus, the 225-residue chain is Uracil-DNA glycosylase (225 aa).

The active-site Proton acceptor is the D65.

This sequence belongs to the uracil-DNA glycosylase (UDG) superfamily. UNG family.

Its subcellular location is the cytoplasm. The catalysed reaction is Hydrolyzes single-stranded DNA or mismatched double-stranded DNA and polynucleotides, releasing free uracil.. In terms of biological role, excises uracil residues from the DNA which can arise as a result of misincorporation of dUMP residues by DNA polymerase or due to deamination of cytosine. This chain is Uracil-DNA glycosylase, found in Bacillus thuringiensis (strain Al Hakam).